Here is a 985-residue protein sequence, read N- to C-terminus: Invasin (985 aa).

A D1 region spans residues Ser-494–Lys-594. The Extracellular portion of the chain corresponds to Ser-494 to Ile-985. Big-1 domains lie at Thr-503–Lys-594 and Lys-601–Thr-691. Residues Gly-595–Pro-694 form a D2 region. Residues Ile-695–Val-794 are D3. The interval Pro-795 to Asn-886 is D4. An integrin-binding region spans residues Pro-795 to Ile-985. Residues Arg-887 to Ile-985 form a D5 region. Cys-906 and Cys-981 form a disulfide bridge.

The protein belongs to the intimin/invasin family.

It is found in the cell surface. Invasin is a protein that allows enteric bacteria to penetrate cultured mammalian cells. The entry of invasin in the cell is mediated by binding several beta-1 chain integrins. The sequence is that of Invasin from Yersinia pseudotuberculosis serotype I (strain IP32953).